A 163-amino-acid polypeptide reads, in one-letter code: Neurotrophin-3 (163 aa).

A signal peptide spans 1–3; that stretch reads IQS. Residues 4–119 constitute a propeptide that is removed on maturation; it reads TSMDQGILTE…VLNRTSRRKR (116 aa). N-linked (GlcNAc...) asparagine glycosylation is present at Asn112. Residues 114–133 are disordered; it reads TSRRKREGKSHRGEYSVCDS. Residues 123–133 are compositionally biased toward basic and acidic residues; the sequence is SHRGEYSVCDS.

Belongs to the NGF-beta family.

The protein resides in the secreted. In terms of biological role, seems to promote the survival of visceral and proprioceptive sensory neurons. The protein is Neurotrophin-3 (NTF3) of Lichanura trivirgata (Rosy boa).